Reading from the N-terminus, the 258-residue chain is Chaperone protein caf1M (258 aa).

An N-terminal signal peptide occupies residues 1 to 20 (MILNRLSTLGIITFGMLSFA). An intrachain disulfide couples cysteine 121 to cysteine 160.

This sequence belongs to the periplasmic pilus chaperone family.

It localises to the periplasm. Functionally, has a stimulatory role for the envelope antigen F1 secretion. It seems to interact with the subunit polypeptide and to prevent it from digestion by a protease. The chain is Chaperone protein caf1M (caf1M) from Yersinia pestis.